Here is a 701-residue protein sequence, read N- to C-terminus: Type 3 secretion system secretin (701 aa).

The first 21 residues, 1–21, serve as a signal peptide directing secretion; that stretch reads MRKALMWLPLLLIGLSPATWA. Residues 229–238 are compositionally biased toward gly residues; that stretch reads RGNGLAGGGS. Residues 229 to 252 are disordered; sequence RGNGLAGGGSPDTPSLPMSSSGLD. The segment covering 240 to 252 has biased composition (polar residues); sequence DTPSLPMSSSGLD.

The protein belongs to the bacterial secretin family. T3SS SctC subfamily. As to quaternary structure, the core secretion machinery of the T3SS is composed of approximately 20 different proteins, including cytoplasmic components, a base, an export apparatus and a needle. This subunit is part of the base, which anchors the injectisome in the bacterial cell envelope. Forms a stable homooligomeric complex.

Its subcellular location is the cell outer membrane. Component of the type III secretion system (T3SS), also called injectisome, which is used to inject bacterial effector proteins into eukaryotic host cells. Forms a ring-shaped multimeric structure with an apparent central pore in the outer membrane. Involved in the secretion of a proteinaceous elicitor of the hypersensitivity response in plants. The chain is Type 3 secretion system secretin from Pseudomonas syringae pv. syringae.